Consider the following 248-residue polypeptide: Ribosomal RNA small subunit methyltransferase G (248 aa).

Residues Gly85, Phe90, 108 to 110 (DSS), 137 to 138 (AE), and Arg156 each bind S-adenosyl-L-methionine.

This sequence belongs to the methyltransferase superfamily. RNA methyltransferase RsmG family.

It is found in the cytoplasm. Specifically methylates the N7 position of a guanine in 16S rRNA. The protein is Ribosomal RNA small subunit methyltransferase G of Prochlorococcus marinus (strain NATL1A).